The chain runs to 852 residues: Taste receptor type 1 member 3 (852 aa).

A signal peptide spans 1 to 20; it reads MLGPAVLGLSLWALLQPGAG. The Extracellular portion of the chain corresponds to 21 to 570; that stretch reads APLCLSQQLR…FLAWGEPAVL (550 aa). 8 N-linked (GlcNAc...) asparagine glycosylation sites follow: Asn-85, Asn-130, Asn-264, Asn-285, Asn-380, Asn-411, Asn-432, and Asn-475. The chain crosses the membrane as a helical span at residues 571–591; that stretch reads LLLLLLSLALGLVLAALGLFV. Over 592–603 the chain is Cytoplasmic; that stretch reads HHRDSPLVQASG. The helical transmembrane segment at 604 to 624 threads the bilayer; the sequence is GPLACFGLVCLGLVCLSVLLF. Residues 625–639 lie on the Extracellular side of the membrane; it reads PGQPSPAQCLAQQPL. The helical transmembrane segment at 640 to 660 threads the bilayer; that stretch reads SHLPLTGCLSTLFLQAAEIFV. The Cytoplasmic portion of the chain corresponds to 661–682; the sequence is ESELPLSWADRLSGCLRGPWAW. Residues 683-703 form a helical membrane-spanning segment; it reads LVVLLAMLVEVALCTWYLVAF. The Extracellular portion of the chain corresponds to 704-729; that stretch reads PPEVVTDWHMLPTEALVHCRTRSWVS. A helical membrane pass occupies residues 730 to 750; sequence FGLAHATNATLAFLCFLGTFL. The Cytoplasmic segment spans residues 751–762; that stretch reads VRSQPGRYNRAR. Residues 763 to 783 form a helical membrane-spanning segment; sequence GLTFAMLAYFITWVSFVPLLA. The Extracellular portion of the chain corresponds to 784–791; sequence NVQVVLRP. The helical transmembrane segment at 792–812 threads the bilayer; that stretch reads AVQMGALLLCVLGILAAFHLP. The Cytoplasmic portion of the chain corresponds to 813–852; sequence RCYLLIRQPGLNTPEFFLGGGPGDAQGRNDGDTGNQGKHE. A disordered region spans residues 833-852; sequence GPGDAQGRNDGDTGNQGKHE. Positions 839–852 are enriched in basic and acidic residues; the sequence is GRNDGDTGNQGKHE.

The protein belongs to the G-protein coupled receptor 3 family. TAS1R subfamily. As to quaternary structure, forms homodimers or heterodimers with TAS1R1 and TAS1R2.

The protein resides in the cell membrane. Its function is as follows. Putative taste receptor. TAS1R1/TAS1R3 responds to the umami taste stimulus (the taste of monosodium glutamate). TAS1R2/TAS1R3 recognizes diverse natural and synthetic sweeteners. TAS1R3 is essential for the recognition and response to the disaccharide trehalose. Sequence differences within and between species can significantly influence the selectivity and specificity of taste responses. The protein is Taste receptor type 1 member 3 (TAS1R3) of Gorilla gorilla gorilla (Western lowland gorilla).